The primary structure comprises 135 residues: Ribonuclease VapC26 (135 aa).

The PINc domain maps to 1-118; the sequence is MIIDTSALLA…TRTILTLDRR (118 aa). Positions 4 and 97 each coordinate Mg(2+).

It belongs to the PINc/VapC protein family. Requires Mg(2+) as cofactor.

Functionally, toxic component of a type II toxin-antitoxin (TA) system. An RNase. Upon expression in M.smegmatis inhibits colony formation. Its toxic effect is neutralized by coexpression with cognate antitoxin VapB26. This chain is Ribonuclease VapC26, found in Mycobacterium tuberculosis (strain ATCC 25618 / H37Rv).